The chain runs to 150 residues: Large ribosomal subunit protein uL15 (150 aa).

Residues 1–57 (MTLRLESLKPNKGARRRKLRKGRGIAAGQGASCGFGMRGQKSRSGRPTRPGFEGGQM) form a disordered region. Residues 12 to 23 (KGARRRKLRKGR) show a composition bias toward basic residues. Gly residues predominate over residues 25 to 37 (IAAGQGASCGFGM).

It belongs to the universal ribosomal protein uL15 family. In terms of assembly, part of the 50S ribosomal subunit.

In terms of biological role, binds to the 23S rRNA. The polypeptide is Large ribosomal subunit protein uL15 (Synechococcus sp. (strain CC9311)).